A 427-amino-acid polypeptide reads, in one-letter code: Trigger factor (427 aa).

One can recognise a PPIase FKBP-type domain in the interval 163–248 (GDTVVIDFVG…VNEVKAKELP (86 aa)).

This sequence belongs to the FKBP-type PPIase family. Tig subfamily.

It localises to the cytoplasm. The catalysed reaction is [protein]-peptidylproline (omega=180) = [protein]-peptidylproline (omega=0). Functionally, involved in protein export. Acts as a chaperone by maintaining the newly synthesized protein in an open conformation. Functions as a peptidyl-prolyl cis-trans isomerase. The sequence is that of Trigger factor from Lactococcus lactis subsp. cremoris (strain SK11).